Reading from the N-terminus, the 528-residue chain is Tyrosine--tRNA ligase, cytoplasmic (528 aa).

Met-1 carries the post-translational modification N-acetylmethionine. Gly-2 carries the post-translational modification N-acetylglycine; in Tyrosine--tRNA ligase, cytoplasmic, N-terminally processed. Residue Tyr-39 coordinates L-tyrosine. Residue Tyr-39 coordinates trans-resveratrol. The 'HIGH' region motif lies at 44–52 (TTGKPHVAY). 4 residues coordinate L-tyrosine: Tyr-166, Gln-170, Asp-173, and Gln-188. Trans-resveratrol-binding residues include Gln-170 and Asp-173. An N6-acetyllysine modification is found at Lys-197. Residue Ser-205 is modified to Phosphoserine. An N6-acetyllysine modification is found at Lys-206. The 'KMSKS' region signature appears at 222–226 (KMSSS). Residues 242 to 247 (KKKLKK) carry the Nuclear localization signal motif. Positions 339–363 (AAYPDPSKQKPPAKGPAKNSEPEEV) are disordered. The tRNA-binding domain occupies 364-468 (IPSRLDIRVG…AGSAPGERVF (105 aa)). A Phosphoserine modification is found at Ser-386. N6-acetyllysine occurs at positions 474, 482, and 490.

It belongs to the class-I aminoacyl-tRNA synthetase family. Homodimer. Interacts (when binding to resveratrol) with PARP1; interaction stimulates the poly-ADP-ribosyltransferase activity of PARP1.

It is found in the cytoplasm. It localises to the nucleus. It catalyses the reaction tRNA(Tyr) + L-tyrosine + ATP = L-tyrosyl-tRNA(Tyr) + AMP + diphosphate + H(+). Its activity is regulated as follows. Resveratrol strongly inhibits the tyrosine--tRNA ligase activity. Its function is as follows. Tyrosine--tRNA ligase that catalyzes the attachment of tyrosine to tRNA(Tyr) in a two-step reaction: tyrosine is first activated by ATP to form Tyr-AMP and then transferred to the acceptor end of tRNA(Tyr). Also acts as a positive regulator of poly-ADP-ribosylation in the nucleus, independently of its tyrosine--tRNA ligase activity. Activity is switched upon resveratrol-binding: resveratrol strongly inhibits the tyrosine--tRNA ligase activity and promotes relocalization to the nucleus, where YARS1 specifically stimulates the poly-ADP-ribosyltransferase activity of PARP1. This chain is Tyrosine--tRNA ligase, cytoplasmic (Yars1), found in Mus musculus (Mouse).